Here is a 450-residue protein sequence, read N- to C-terminus: UDP-N-acetylmuramoylalanine--D-glutamate ligase (450 aa).

ATP is bound at residue 119–125 (GSNGKTT).

It belongs to the MurCDEF family.

It is found in the cytoplasm. It carries out the reaction UDP-N-acetyl-alpha-D-muramoyl-L-alanine + D-glutamate + ATP = UDP-N-acetyl-alpha-D-muramoyl-L-alanyl-D-glutamate + ADP + phosphate + H(+). Its pathway is cell wall biogenesis; peptidoglycan biosynthesis. Its function is as follows. Cell wall formation. Catalyzes the addition of glutamate to the nucleotide precursor UDP-N-acetylmuramoyl-L-alanine (UMA). This chain is UDP-N-acetylmuramoylalanine--D-glutamate ligase, found in Bacillus cereus (strain ATCC 10987 / NRS 248).